Here is a 192-residue protein sequence, read N- to C-terminus: Peptidyl-tRNA hydrolase (192 aa).

TRNA is bound at residue His-17. The active-site Proton acceptor is the His-22. TRNA contacts are provided by Phe-68, Asn-70, and Asn-116.

The protein belongs to the PTH family. In terms of assembly, monomer.

It is found in the cytoplasm. The enzyme catalyses an N-acyl-L-alpha-aminoacyl-tRNA + H2O = an N-acyl-L-amino acid + a tRNA + H(+). In terms of biological role, hydrolyzes ribosome-free peptidyl-tRNAs (with 1 or more amino acids incorporated), which drop off the ribosome during protein synthesis, or as a result of ribosome stalling. Catalyzes the release of premature peptidyl moieties from peptidyl-tRNA molecules trapped in stalled 50S ribosomal subunits, and thus maintains levels of free tRNAs and 50S ribosomes. The chain is Peptidyl-tRNA hydrolase from Stenotrophomonas maltophilia (strain R551-3).